The sequence spans 473 residues: MKTLYSLRRFYHVETLFNGTLALAGRDQETTGFAWWAGNARLINLSGKLLGAHVAHAGLIVFWAGAMNLFEVAHFVPEKPMYEQGLILLPHLATLGWGVGPGGEVIDTFPYFVSGVLHLISSAVLGFGGIYHALLGPETLEESFPFFGYVWKDRNKMTTILGIHLILLGIGAFLLVFKALYFGGVYDTWAPGGGDVRKITNLTLSPSVIFGYLLKSPFGGEGWIVSVDDLEDIIGGHVWLGSICIFGGIWHILTKPFAWARRALVWSGEAYLSYSLGALSVFGFIACCFVWFNNTAYPSEFYGPTGPEASQAQAFTFLVRDQRLGANVGSAQGPTGLGKYLMRSPTGEVIFGGETMRFWDLRAPWLEPLRGPNGLDLSRLKKDIQPWQERRSAEYMTHAPLGSLNSVGGVATEINAVNYVSPRSWLATSHFVLGFFLFVGHLWHAGRARAAAAGFEKGIDRDLEPVLFMTPLN.

A propeptide spanning residues 1–14 (MKTLYSLRRFYHVE) is cleaved from the precursor. Thr15 carries the post-translational modification N-acetylthreonine. Thr15 carries the phosphothreonine modification. 5 helical membrane-spanning segments follow: residues 69–93 (LFEV…PHLA), 134–155 (LLGP…KDRN), 178–200 (KALY…RKIT), 255–275 (KPFA…LSYS), and 291–312 (WFNN…ASQA). Glu367 provides a ligand contact to [CaMn4O5] cluster. A helical membrane pass occupies residues 447 to 471 (RARAAAAGFEKGIDRDLEPVLFMTP).

The protein belongs to the PsbB/PsbC family. PsbC subfamily. PSII is composed of 1 copy each of membrane proteins PsbA, PsbB, PsbC, PsbD, PsbE, PsbF, PsbH, PsbI, PsbJ, PsbK, PsbL, PsbM, PsbT, PsbX, PsbY, PsbZ, Psb30/Ycf12, at least 3 peripheral proteins of the oxygen-evolving complex and a large number of cofactors. It forms dimeric complexes. Binds multiple chlorophylls and provides some of the ligands for the Ca-4Mn-5O cluster of the oxygen-evolving complex. It may also provide a ligand for a Cl- that is required for oxygen evolution. PSII binds additional chlorophylls, carotenoids and specific lipids. is required as a cofactor.

Its subcellular location is the plastid. It localises to the chloroplast thylakoid membrane. One of the components of the core complex of photosystem II (PSII). It binds chlorophyll and helps catalyze the primary light-induced photochemical processes of PSII. PSII is a light-driven water:plastoquinone oxidoreductase, using light energy to abstract electrons from H(2)O, generating O(2) and a proton gradient subsequently used for ATP formation. In Carica papaya (Papaya), this protein is Photosystem II CP43 reaction center protein.